The chain runs to 431 residues: Enolase (431 aa).

Gln167 contacts (2R)-2-phosphoglycerate. Catalysis depends on Glu209, which acts as the Proton donor. The Mg(2+) site is built by Asp246, Glu289, and Asp316. 4 residues coordinate (2R)-2-phosphoglycerate: Lys341, Arg370, Ser371, and Lys392. The active-site Proton acceptor is Lys341.

Belongs to the enolase family. In terms of assembly, component of the RNA degradosome, a multiprotein complex involved in RNA processing and mRNA degradation. The cofactor is Mg(2+).

Its subcellular location is the cytoplasm. It is found in the secreted. The protein resides in the cell surface. It catalyses the reaction (2R)-2-phosphoglycerate = phosphoenolpyruvate + H2O. It participates in carbohydrate degradation; glycolysis; pyruvate from D-glyceraldehyde 3-phosphate: step 4/5. Its function is as follows. Catalyzes the reversible conversion of 2-phosphoglycerate (2-PG) into phosphoenolpyruvate (PEP). It is essential for the degradation of carbohydrates via glycolysis. The polypeptide is Enolase (Shewanella denitrificans (strain OS217 / ATCC BAA-1090 / DSM 15013)).